Reading from the N-terminus, the 204-residue chain is Cysteine-rich protein 3 (204 aa).

The region spanning 3-64 (WTCPRCQQPV…KPCYGALFGP (62 aa)) is the LIM zinc-binding 1 domain. A disordered region spans residues 88–107 (ISLSPSNFSPPRPRTGLSRA). The LIM zinc-binding 2 domain maps to 122-183 (SLCPGCGDPV…IPCYGYLFGP (62 aa)).

In terms of tissue distribution, expressed specifically by the thymus.

It is found in the cytoplasm. The protein is Cysteine-rich protein 3 (Crip3) of Mus musculus (Mouse).